A 426-amino-acid chain; its full sequence is Vacuole membrane protein hfl11 (426 aa).

5 helical membrane passes run 39-59 (SVVRILMMIVIYSSVSFLSVY), 73-93 (IYEAFALYCFFCLLIDYLGGE), 133-153 (GILQYTWLKPFLVIAVLLTKV), 172-192 (IGLVYNISITLSLYSLTTFWV), and 223-243 (VLSITNWLGLLNGTGWIYSLL). Phosphoserine is present on Ser364. The tract at residues 386–409 (LQFEIDDEMEPLYNQAKQMRYGDY) is ATG8-interacting region.

The protein belongs to the TMEM184 family. In terms of assembly, interacts with atg8.

Its subcellular location is the vacuole membrane. Its function is as follows. Vacuole membrane protein that recruits ATG8 to facilitate the degradation of vacuolar integral membrane proteins during early-stationary vacuole turnover (EVT) when cells enter stationary phase. The chain is Vacuole membrane protein hfl11 from Schizosaccharomyces pombe (strain 972 / ATCC 24843) (Fission yeast).